The chain runs to 546 residues: Phosphomethylpyrimidine synthase (546 aa).

Substrate-binding positions include N145, M174, Y203, H239, 259 to 261 (SRG), 300 to 303 (DGLR), and E339. H343 contributes to the Zn(2+) binding site. Y366 serves as a coordination point for substrate. Residue H407 participates in Zn(2+) binding. Residues C487, C490, and C495 each contribute to the [4Fe-4S] cluster site.

The protein belongs to the ThiC family. Requires [4Fe-4S] cluster as cofactor.

It carries out the reaction 5-amino-1-(5-phospho-beta-D-ribosyl)imidazole + S-adenosyl-L-methionine = 4-amino-2-methyl-5-(phosphooxymethyl)pyrimidine + CO + 5'-deoxyadenosine + formate + L-methionine + 3 H(+). It participates in cofactor biosynthesis; thiamine diphosphate biosynthesis. Functionally, catalyzes the synthesis of the hydroxymethylpyrimidine phosphate (HMP-P) moiety of thiamine from aminoimidazole ribotide (AIR) in a radical S-adenosyl-L-methionine (SAM)-dependent reaction. The sequence is that of Phosphomethylpyrimidine synthase from Mycobacterium ulcerans (strain Agy99).